The primary structure comprises 226 residues: Large ribosomal subunit protein uL3 (226 aa).

The tract at residues 136–162 (NFGSQRASHGNSRSHNVPGSISMAQDP) is disordered. The segment covering 137–158 (FGSQRASHGNSRSHNVPGSISM) has biased composition (polar residues). N5-methylglutamine is present on Q160.

Belongs to the universal ribosomal protein uL3 family. In terms of assembly, part of the 50S ribosomal subunit. Forms a cluster with proteins L14 and L19. Post-translationally, methylated by PrmB.

One of the primary rRNA binding proteins, it binds directly near the 3'-end of the 23S rRNA, where it nucleates assembly of the 50S subunit. The chain is Large ribosomal subunit protein uL3 from Methylibium petroleiphilum (strain ATCC BAA-1232 / LMG 22953 / PM1).